The following is a 31-amino-acid chain: Cyclotide mden-L (31 aa).

A cross-link (cyclopeptide (Gly-Asn)) is located at residues 1-31 (GSIPCGESCVYIPCISAVLGCSCKNKVCYRN). Cystine bridges form between cysteine 5–cysteine 21, cysteine 9–cysteine 23, and cysteine 14–cysteine 28.

It belongs to the cyclotide family. Bracelet subfamily. Post-translationally, this is a cyclic peptide.

In terms of biological role, probably participates in a plant defense mechanism. The protein is Cyclotide mden-L of Melicytus dentatus (Tree violet).